The primary structure comprises 407 residues: Peptidase T (407 aa).

His81 provides a ligand contact to Zn(2+). The active site involves Asp83. Asp142 is a binding site for Zn(2+). The active-site Proton acceptor is Glu176. Zn(2+)-binding residues include Glu177, Asp199, and His381.

The protein belongs to the peptidase M20B family. Zn(2+) serves as cofactor.

It localises to the cytoplasm. The enzyme catalyses Release of the N-terminal residue from a tripeptide.. Its function is as follows. Cleaves the N-terminal amino acid of tripeptides. The protein is Peptidase T of Streptococcus sanguinis (strain SK36).